An 864-amino-acid polypeptide reads, in one-letter code: Leucine--tRNA ligase (864 aa).

The short motif at 42 to 52 (PYPSGKLHMGH) is the 'HIGH' region element. The short motif at 624–628 (KMSKS) is the 'KMSKS' region element. Position 627 (Lys-627) interacts with ATP.

It belongs to the class-I aminoacyl-tRNA synthetase family.

It is found in the cytoplasm. The enzyme catalyses tRNA(Leu) + L-leucine + ATP = L-leucyl-tRNA(Leu) + AMP + diphosphate. This is Leucine--tRNA ligase from Burkholderia pseudomallei (strain 668).